The sequence spans 301 residues: Protoheme IX farnesyltransferase (301 aa).

The next 9 helical transmembrane spans lie at 29–49 (VVAL…PGTV), 51–71 (LVPL…AAAF), 96–116 (ISII…FIIL), 123–143 (LTAW…TAYL), 151–171 (IVVG…AVTG), 177–197 (ALLL…ALAI), 223–243 (CIFL…LVGM), 244–264 (CGPV…YKAW), and 281–301 (FSIY…YLWV).

Belongs to the UbiA prenyltransferase family. Protoheme IX farnesyltransferase subfamily.

Its subcellular location is the cell inner membrane. It catalyses the reaction heme b + (2E,6E)-farnesyl diphosphate + H2O = Fe(II)-heme o + diphosphate. Its pathway is porphyrin-containing compound metabolism; heme O biosynthesis; heme O from protoheme: step 1/1. Converts heme B (protoheme IX) to heme O by substitution of the vinyl group on carbon 2 of heme B porphyrin ring with a hydroxyethyl farnesyl side group. This is Protoheme IX farnesyltransferase from Shewanella pealeana (strain ATCC 700345 / ANG-SQ1).